The following is a 216-amino-acid chain: Large ribosomal subunit protein uL4 (216 aa).

The tract at residues 47 to 77 is disordered; that stretch reads THKVKGMGEVSGTTKKPYRQKGTGNARQGSL.

It belongs to the universal ribosomal protein uL4 family. In terms of assembly, part of the 50S ribosomal subunit.

Its function is as follows. One of the primary rRNA binding proteins, this protein initially binds near the 5'-end of the 23S rRNA. It is important during the early stages of 50S assembly. It makes multiple contacts with different domains of the 23S rRNA in the assembled 50S subunit and ribosome. Forms part of the polypeptide exit tunnel. In Acidiphilium cryptum (strain JF-5), this protein is Large ribosomal subunit protein uL4.